The following is a 550-amino-acid chain: Glucose-6-phosphate isomerase (550 aa).

D-glucose 6-phosphate is bound by residues 164-165 (GS), 215-220 (SKTFTT), Gln-359, Glu-363, and His-394. Glu-363 serves as the catalytic Proton donor. The active site involves His-394. Thr-455 carries the post-translational modification Phosphothreonine. Residue Lys-516 participates in D-glucose 6-phosphate binding. Lys-516 is a catalytic residue.

Belongs to the GPI family. Homodimer.

It is found in the cytoplasm. The protein localises to the cytosol. It carries out the reaction alpha-D-glucose 6-phosphate = beta-D-fructose 6-phosphate. Its pathway is carbohydrate degradation; glycolysis; D-glyceraldehyde 3-phosphate and glycerone phosphate from D-glucose: step 2/4. Its function is as follows. In the cytoplasm, catalyzes the conversion of glucose-6-phosphate to fructose-6-phosphate, the second step in glycolysis, and the reverse reaction during gluconeogenesis. The sequence is that of Glucose-6-phosphate isomerase (pgi1) from Schizosaccharomyces pombe (strain 972 / ATCC 24843) (Fission yeast).